A 268-amino-acid chain; its full sequence is Sexual development regulator velC (268 aa).

Basic and acidic residues predominate over residues 1-13 (MPHGFDKLLHPEP). Disordered stretches follow at residues 1–124 (MPHG…DNFS) and 142–165 (DPDPNSAPAHPSSISDPHISNPPH). Residues 14–26 (EPQSPSPPPPPRR) are compositionally biased toward pro residues. The Velvet domain occupies 28-257 (STQSRYHLHI…ELGFVELKTR (230 aa)). The segment covering 92-121 (DGNRDREREREHERERERERETDGVARTDD) has biased composition (basic and acidic residues).

It belongs to the velvet family. VelC subfamily. In terms of assembly, interacts with velA and vosA.

Its subcellular location is the nucleus. Functionally, velvet-domain-containing protein that acts as a positive regulator of sexual development. This chain is Sexual development regulator velC, found in Penicillium rubens (strain ATCC 28089 / DSM 1075 / NRRL 1951 / Wisconsin 54-1255) (Penicillium chrysogenum).